A 442-amino-acid polypeptide reads, in one-letter code: MRVLSFLCLLLVSYASAKQQFSELQYRNAFTNWMQAHQRTYSSEEFNARYQIFKSNMDYVHQWNSKGGETVLGLNVFADITNQEYRTTYLGTPFDGSALIGTEEEKIFSTPAPTVDWRAQGAVTPIKNQGQCGGCWSFSTTGSTEGAHFIASGTKKDLVSLSEQNLIDCSKSYGNNGCEGGLMTLAFEYIINNKGIDTESSYPYTAEDGKECKFKTSNIGAQIVSYQNVTSGSEASLQSASNNAPVSVAIDASNESFQLYESGIYYEPACSPTQLDHGVLVVGYGSGSSSSSGSSSGKSSSSSSTGGKTSSSSSSGKASSSSSGKASSSSSSGKTSSAASSTSGSQSGSQSGSQSGQSTGSQSGQTSASGQASASGSGSGSGSGSGSGSGSGAVEASSGNYWIVKNSWGTSWGMDGYIFMSKDRNNNCGIATMASFPTASSN.

Positions 1–17 (MRVLSFLCLLLVSYASA) are cleaved as a signal peptide. Positions 18–111 (KQQFSELQYR…TEEEKIFSTP (94 aa)) are cleaved as a propeptide — activation peptide. 2 disulfide bridges follow: C132/C178 and C169/C212. The active site involves C135. 2 N-linked (GlcNAc...) asparagine glycosylation sites follow: N228 and N254. C270 and C428 are disulfide-bonded. The active site involves H277. The tract at residues 286–396 (SGSSSSSGSS…SGSGSGAVEA (111 aa)) is disordered. The span at 287–376 (GSSSSSGSSS…SASGQASASG (90 aa)) shows a compositional bias: low complexity. Over residues 377–391 (SGSGSGSGSGSGSGS) the composition is skewed to gly residues. Residue N406 is part of the active site.

This sequence belongs to the peptidase C1 family. Glycosylated; contains GlcNAc-alpha-1-P-Ser residues and fucose.

The protein localises to the lysosome. This is Cysteine proteinase 4 (cprD) from Dictyostelium discoideum (Social amoeba).